An 89-amino-acid polypeptide reads, in one-letter code: Small ribosomal subunit protein uS15 (89 aa).

It belongs to the universal ribosomal protein uS15 family. As to quaternary structure, part of the 30S ribosomal subunit. Forms a bridge to the 50S subunit in the 70S ribosome, contacting the 23S rRNA.

Functionally, one of the primary rRNA binding proteins, it binds directly to 16S rRNA where it helps nucleate assembly of the platform of the 30S subunit by binding and bridging several RNA helices of the 16S rRNA. In terms of biological role, forms an intersubunit bridge (bridge B4) with the 23S rRNA of the 50S subunit in the ribosome. The polypeptide is Small ribosomal subunit protein uS15 (Oleidesulfovibrio alaskensis (strain ATCC BAA-1058 / DSM 17464 / G20) (Desulfovibrio alaskensis)).